A 607-amino-acid polypeptide reads, in one-letter code: Dihydroxy-acid dehydratase (607 aa).

Mg(2+) is bound at residue Asp81. Residue Cys122 participates in [2Fe-2S] cluster binding. The Mg(2+) site is built by Asp123 and Lys124. The residue at position 124 (Lys124) is an N6-carboxylysine. Cys195 provides a ligand contact to [2Fe-2S] cluster. Glu489 contributes to the Mg(2+) binding site. Ser515 functions as the Proton acceptor in the catalytic mechanism.

The protein belongs to the IlvD/Edd family. Homodimer. Requires [2Fe-2S] cluster as cofactor. Mg(2+) is required as a cofactor.

It carries out the reaction (2R)-2,3-dihydroxy-3-methylbutanoate = 3-methyl-2-oxobutanoate + H2O. The catalysed reaction is (2R,3R)-2,3-dihydroxy-3-methylpentanoate = (S)-3-methyl-2-oxopentanoate + H2O. Its pathway is amino-acid biosynthesis; L-isoleucine biosynthesis; L-isoleucine from 2-oxobutanoate: step 3/4. It functions in the pathway amino-acid biosynthesis; L-valine biosynthesis; L-valine from pyruvate: step 3/4. Functionally, functions in the biosynthesis of branched-chain amino acids. Catalyzes the dehydration of (2R,3R)-2,3-dihydroxy-3-methylpentanoate (2,3-dihydroxy-3-methylvalerate) into 2-oxo-3-methylpentanoate (2-oxo-3-methylvalerate) and of (2R)-2,3-dihydroxy-3-methylbutanoate (2,3-dihydroxyisovalerate) into 2-oxo-3-methylbutanoate (2-oxoisovalerate), the penultimate precursor to L-isoleucine and L-valine, respectively. This chain is Dihydroxy-acid dehydratase, found in Deinococcus radiodurans (strain ATCC 13939 / DSM 20539 / JCM 16871 / CCUG 27074 / LMG 4051 / NBRC 15346 / NCIMB 9279 / VKM B-1422 / R1).